We begin with the raw amino-acid sequence, 196 residues long: Heat shock protein beta-8 (196 aa).

The tract at residues 1–28 (MADGQLPFPCSYPSRLRRDPFRDSPLSS) is disordered. Residues S24 and S57 each carry the phosphoserine modification. T63 bears the Phosphothreonine mark. Asymmetric dimethylarginine is present on residues R71 and R78. Residues 78–185 (RFGVPAEGRS…PFGESSFNNE (108 aa)) enclose the sHSP domain. Residue S87 is modified to Phosphoserine. Positions 176-196 (PFGESSFNNELPQDNQEVTCS) are disordered. Residues 178-196 (GESSFNNELPQDNQEVTCS) are compositionally biased toward polar residues.

It belongs to the small heat shock protein (HSP20) family. In terms of assembly, monomer. Forms a ternary complex with BAG3 and HSPA1A. Component of the chaperone-assisted selective autophagy (CASA) complex consisting of BAG3, HSPA8/HSC70, HSPB8 and STUB1/CHIP. Interacts with HSPB1. Interacts with DNAJB6. Interacts with BAG3. As to expression, highly expressed in skeletal muscle, heart, uterus, liver, lung and ovary. Low levels found in stomach and brain. Not detected in small intestine, large intestine, kidney, spleen and testis. In the ovary, expression is concentrated in the endometrium and in the connective tissue between the circular and longitudinal muscles of the myometrium.

It is found in the cytoplasm. The protein localises to the nucleus. Functionally, involved in the chaperone-assisted selective autophagy (CASA), a crucial process for protein quality control, particularly in mechanical strained cells and tissues such as muscle. Displays temperature-dependent chaperone activity. In Mus musculus (Mouse), this protein is Heat shock protein beta-8 (Hspb8).